The following is a 338-amino-acid chain: Ketol-acid reductoisomerase (NADP(+)) (338 aa).

The 181-residue stretch at 1-181 (MKVFYDKDAD…GGGRAGIIET (181 aa)) folds into the KARI N-terminal Rossmann domain. NADP(+)-binding positions include 24–27 (YGSQ), Arg-47, and Ser-52. The active site involves His-107. Residue Gly-133 participates in NADP(+) binding. One can recognise a KARI C-terminal knotted domain in the interval 182 to 327 (NFREETETDL…EKLRAMMPWI (146 aa)). Asp-190, Glu-194, Glu-226, and Glu-230 together coordinate Mg(2+). Ser-251 lines the substrate pocket.

It belongs to the ketol-acid reductoisomerase family. Requires Mg(2+) as cofactor.

It carries out the reaction (2R)-2,3-dihydroxy-3-methylbutanoate + NADP(+) = (2S)-2-acetolactate + NADPH + H(+). It catalyses the reaction (2R,3R)-2,3-dihydroxy-3-methylpentanoate + NADP(+) = (S)-2-ethyl-2-hydroxy-3-oxobutanoate + NADPH + H(+). It functions in the pathway amino-acid biosynthesis; L-isoleucine biosynthesis; L-isoleucine from 2-oxobutanoate: step 2/4. It participates in amino-acid biosynthesis; L-valine biosynthesis; L-valine from pyruvate: step 2/4. In terms of biological role, involved in the biosynthesis of branched-chain amino acids (BCAA). Catalyzes an alkyl-migration followed by a ketol-acid reduction of (S)-2-acetolactate (S2AL) to yield (R)-2,3-dihydroxy-isovalerate. In the isomerase reaction, S2AL is rearranged via a Mg-dependent methyl migration to produce 3-hydroxy-3-methyl-2-ketobutyrate (HMKB). In the reductase reaction, this 2-ketoacid undergoes a metal-dependent reduction by NADPH to yield (R)-2,3-dihydroxy-isovalerate. This is Ketol-acid reductoisomerase (NADP(+)) from Cupriavidus taiwanensis (strain DSM 17343 / BCRC 17206 / CCUG 44338 / CIP 107171 / LMG 19424 / R1) (Ralstonia taiwanensis (strain LMG 19424)).